Here is a 440-residue protein sequence, read N- to C-terminus: Argininosuccinate lyase (440 aa).

Belongs to the lyase 1 family. Argininosuccinate lyase subfamily.

Its subcellular location is the cytoplasm. It carries out the reaction 2-(N(omega)-L-arginino)succinate = fumarate + L-arginine. It participates in amino-acid biosynthesis; L-arginine biosynthesis; L-arginine from L-ornithine and carbamoyl phosphate: step 3/3. This is Argininosuccinate lyase from Clostridium botulinum (strain 657 / Type Ba4).